The following is a 556-amino-acid chain: Transcription factor IIIB 70 kDa subunit (556 aa).

The TFIIB-type zinc finger occupies 8 to 41 (SSRKCKNCGSTDFVRDISNTTNELICKVCGLVTE). The Zn(2+) site is built by cysteine 12, cysteine 15, cysteine 33, and cysteine 36. 2 repeat units span residues 98-174 (LKAV…TFLK) and 193-272 (IQHF…RLNE). The interval 98-272 (LKAVSYALNI…EETLQQRLNE (175 aa)) is interaction with TBP and with the Pol III subunit C34. The interval 284-556 (KEFRDDETEV…DAINGLFGQK (273 aa)) is interaction with TBP. Disordered stretches follow at residues 287–309 (RDDETEVNEGERSAESKPPSFDK) and 477–501 (ADLASGNTSLRKKRSKRTNRNQSSA). Residues 295–309 (EGERSAESKPPSFDK) show a composition bias toward basic and acidic residues. Basic residues predominate over residues 486–495 (LRKKRSKRTN).

It belongs to the TFIIB family. TFIIIB comprises the TATA-binding protein (TBP), the B-related factor (BRF) and a 70 kDa polypeptide.

Its subcellular location is the nucleus. In terms of biological role, general activator of RNA polymerase III transcription. Interacts with TBP. Binds to Pol III subunit C34 and to the TAU135 component of TFIIIC. The polypeptide is Transcription factor IIIB 70 kDa subunit (TDS4) (Kluyveromyces lactis (strain ATCC 8585 / CBS 2359 / DSM 70799 / NBRC 1267 / NRRL Y-1140 / WM37) (Yeast)).